Reading from the N-terminus, the 362-residue chain is tRNA-specific 2-thiouridylase MnmA (362 aa).

Residues 9-16 and methionine 35 contribute to the ATP site; that span reads GMSGGVDS. An interaction with target base in tRNA region spans residues 95–97; sequence NPD. Catalysis depends on cysteine 100, which acts as the Nucleophile. Cysteine 100 and cysteine 196 are disulfide-bonded. Glycine 124 provides a ligand contact to ATP. The interaction with tRNA stretch occupies residues 146-148; it reads KDQ. Cysteine 196 functions as the Cysteine persulfide intermediate in the catalytic mechanism. Residues 308 to 309 form an interaction with tRNA region; it reads RY.

The protein belongs to the MnmA/TRMU family.

Its subcellular location is the cytoplasm. The catalysed reaction is S-sulfanyl-L-cysteinyl-[protein] + uridine(34) in tRNA + AH2 + ATP = 2-thiouridine(34) in tRNA + L-cysteinyl-[protein] + A + AMP + diphosphate + H(+). Its function is as follows. Catalyzes the 2-thiolation of uridine at the wobble position (U34) of tRNA, leading to the formation of s(2)U34. This chain is tRNA-specific 2-thiouridylase MnmA, found in Nitrosomonas europaea (strain ATCC 19718 / CIP 103999 / KCTC 2705 / NBRC 14298).